Consider the following 484-residue polypeptide: Solute carrier family 40 member 1 (484 aa).

Helical transmembrane passes span 58–78 (LLTAVYGVVEASAVAALGPIV), 94–114 (WLLLQGASFVAAGVSVTALLV), 123–143 (GFPAFVALVVVTNVSGALAAL), 189–209 (VLSGFFISFVSMEASAAALAA), 212–232 (LAAVWVQYWLFVSVYAGFPAL), 279–299 (VVLPGVALAFLYFTVLSFGTL), 308–328 (GIPAYVISLARGVSAAVGIAA), 346–366 (LWSIWAQWCCLLVCVASVWAG), 377–397 (LMGGVAASRLGLWMFDLAVMQ), 413–433 (GVQNSLQSMFDLLTYVMGIIV), and 442–462 (LIVLSFFLVTCAAAMYTMHVY).

It belongs to the ferroportin (FP) (TC 2.A.100) family. SLC40A subfamily.

It localises to the membrane. Functionally, may be involved in iron transport and iron homeostasis. This Oryza sativa subsp. japonica (Rice) protein is Solute carrier family 40 member 1.